The primary structure comprises 396 residues: Elongation factor Tu (396 aa).

Positions 10–206 constitute a tr-type G domain; sequence KEHVNIGTIG…AVDTWIETPV (197 aa). Residues 19-26 are G1; that stretch reads GHVDHGKT. 19–26 serves as a coordination point for GTP; it reads GHVDHGKT. T26 provides a ligand contact to Mg(2+). Positions 60–64 are G2; the sequence is GITIN. The G3 stretch occupies residues 81–84; the sequence is DCPG. GTP is bound by residues 81–85 and 136–139; these read DCPGH and NKCD. The G4 stretch occupies residues 136 to 139; it reads NKCD. Residues 176 to 178 are G5; the sequence is SAL.

The protein belongs to the TRAFAC class translation factor GTPase superfamily. Classic translation factor GTPase family. EF-Tu/EF-1A subfamily. In terms of assembly, monomer.

The protein localises to the cytoplasm. The enzyme catalyses GTP + H2O = GDP + phosphate + H(+). Functionally, GTP hydrolase that promotes the GTP-dependent binding of aminoacyl-tRNA to the A-site of ribosomes during protein biosynthesis. The chain is Elongation factor Tu from Mycoplasmopsis agalactiae (strain NCTC 10123 / CIP 59.7 / PG2) (Mycoplasma agalactiae).